A 251-amino-acid polypeptide reads, in one-letter code: uncharacterized protein (251 aa).

The protein belongs to the chlamydial CPn_0206/CT_203/TC_0475 family.

This is an uncharacterized protein from Chlamydia trachomatis serovar D (strain ATCC VR-885 / DSM 19411 / UW-3/Cx).